A 140-amino-acid polypeptide reads, in one-letter code: Nucleoside triphosphatase NudI (140 aa).

The Nudix hydrolase domain maps to 1 to 140 (MRHRTIVCPL…RVTLSLKGLL (140 aa)). The short motif at 38-58 (GVEPGERIEEALRREIREELG) is the Nudix box element.

This sequence belongs to the Nudix hydrolase family. NudI subfamily. Monomer. The cofactor is Mg(2+).

The catalysed reaction is a ribonucleoside 5'-triphosphate + H2O = a ribonucleoside 5'-phosphate + diphosphate + H(+). The enzyme catalyses a 2'-deoxyribonucleoside 5'-triphosphate + H2O = a 2'-deoxyribonucleoside 5'-phosphate + diphosphate + H(+). It carries out the reaction dUTP + H2O = dUMP + diphosphate + H(+). It catalyses the reaction dTTP + H2O = dTMP + diphosphate + H(+). The catalysed reaction is dCTP + H2O = dCMP + diphosphate + H(+). In terms of biological role, catalyzes the hydrolysis of nucleoside triphosphates, with a preference for pyrimidine deoxynucleoside triphosphates (dUTP, dTTP and dCTP). The sequence is that of Nucleoside triphosphatase NudI from Klebsiella pneumoniae subsp. pneumoniae (strain ATCC 700721 / MGH 78578).